The following is a 357-amino-acid chain: Membrane-bound lytic murein transglycosylase C (357 aa).

Residues 1-17 (MKLKKFLVLLLIPFLYA) form the signal peptide. A lipid anchor (N-palmitoyl cysteine) is attached at Cys-18. Cys-18 carries S-diacylglycerol cysteine lipidation.

Belongs to the transglycosylase Slt family.

It is found in the cell outer membrane. The catalysed reaction is Exolytic cleavage of the (1-&gt;4)-beta-glycosidic linkage between N-acetylmuramic acid (MurNAc) and N-acetylglucosamine (GlcNAc) residues in peptidoglycan, from either the reducing or the non-reducing ends of the peptidoglycan chains, with concomitant formation of a 1,6-anhydrobond in the MurNAc residue.. Murein-degrading enzyme. May play a role in recycling of muropeptides during cell elongation and/or cell division. This is Membrane-bound lytic murein transglycosylase C from Mannheimia succiniciproducens (strain KCTC 0769BP / MBEL55E).